The primary structure comprises 316 residues: tRNA dimethylallyltransferase (316 aa).

17–24 (GPTASGKT) lines the ATP pocket. 19–24 (TASGKT) provides a ligand contact to substrate. Interaction with substrate tRNA stretches follow at residues 42–45 (DSAL), 166–170 (QRLSR), 247–252 (RCVGYR), and 280–287 (KRQITWLR).

It belongs to the IPP transferase family. As to quaternary structure, monomer. Mg(2+) is required as a cofactor.

The catalysed reaction is adenosine(37) in tRNA + dimethylallyl diphosphate = N(6)-dimethylallyladenosine(37) in tRNA + diphosphate. In terms of biological role, catalyzes the transfer of a dimethylallyl group onto the adenine at position 37 in tRNAs that read codons beginning with uridine, leading to the formation of N6-(dimethylallyl)adenosine (i(6)A). This chain is tRNA dimethylallyltransferase, found in Shigella flexneri serotype 5b (strain 8401).